We begin with the raw amino-acid sequence, 1012 residues long: MDPPSPSRASQTQPVAPSPLTSYRWHSGGGAEKGAGGFRWGRLAGWGRAQSHQETTASSQPAPRSLFRRVLSAPPKESRTSRLKISKSLWGKNKSPPLDSEPEPENPEPEPELEPLATQIPEAPTPDVPVWNIEAFTLLDGKLVLLGNEDEGPRQPRMGSASSESSIHVASGNLKDPDRTPGKTDPEAAGPHQIHNVRGLLKRLKEKKKAKSELGASASRDGPPSALGSRESLATISELDLGAERDVRVWPLHPSLLEEPHCFQVTWAGGSRCFSCRSAAERDRWIEDLRRHFQPSQDNVEREETWLSVWVHEVKGLPRAAAAAPGVRTELWLDGALLARTTPRAGPGQLFWAERFHFEALPPARRLSLRLRGAGPGDAVLGRVALALEELGIPRAPAAGLERWFPLLGAPAGAALRARIRARRLRVLPSERYKELAEFLTFHYARLCGALELALSAQAKEELAAAMVRVLRATGRAQALVTDLGTAELARSGGREALLFRENTLATKAIDEYMKLVAQDYLQETLGQVVRRLCASTEDCEVDPSKCPASDLPQHQSRLRNSCKEVFENIIHSYNWFPAELGTVFSGWREACKARGSEALGPRLVCASLFLRLLCPAILSPSLFGLALEHPAPGPARTLTLIAKVIQNLANRAPFGEKEAYMSFMNTFLEDHGPAMQHFLDQVATVDADTAPSGYQGSSDLALQLAVLHAQLCTIFAELDQATRDNLEPLPTILHAIEEGRPVPVTVPMCLPAPRTQGHSSISAGEKPGFLAPRDLPKHTPLISKSQSLRSVHGAGSWARPRLEEEQPPRLPRPVKRTQSVPAGRPARRRPSAGPRPRPKGSLHAGPAPRGRPWTGASASLPRKPSVPWQRQMDQPRDKDQALGTHRPVGKLAELQCEVAALRQDLKMLSGLVESLSTHIRSLSEQQEQLRTQLQLLDSRLREGTAKLDPGRDRSTNEGHRLKSLECRLAEIESTQAQLKDTIQNLQLLPRTSESQSQPVPLKAPCINGDTT.

Disordered stretches follow at residues 1 to 128 (MDPP…TPDV), 147 to 196 (GNED…QIHN), and 208 to 229 (KKAK…ALGS). Positions 7–21 (SRASQTQPVAPSPLT) are enriched in polar residues. A Phosphoserine modification is found at S18. Residues 27 to 39 (SGGGAEKGAGGFR) are compositionally biased toward gly residues. Over residues 50 to 62 (QSHQETTASSQPA) the composition is skewed to polar residues. Residue S51 is modified to Phosphoserine. A compositionally biased stretch (acidic residues) spans 100 to 113 (SEPEPENPEPEPEL). Phosphoserine occurs at positions 160, 162, 163, and 166. The span at 160 to 171 (SASSESSIHVAS) shows a compositional bias: low complexity. Over residues 175–186 (KDPDRTPGKTDP) the composition is skewed to basic and acidic residues. One can recognise a PH domain in the interval 193-294 (QIHNVRGLLK…WIEDLRRHFQ (102 aa)). 4 positions are modified to phosphoserine: S212, S225, S229, and S232. T235 is modified (phosphothreonine). Positions 285-405 (WIEDLRRHFQ…APAAGLERWF (121 aa)) constitute a C2 domain. In terms of domain architecture, Ras-GAP spans 475-683 (GRAQALVTDL…PAMQHFLDQV (209 aa)). The disordered stretch occupies residues 752 to 887 (PAPRTQGHSS…DKDQALGTHR (136 aa)). A phosphoserine mark is found at S788 and S791. The span at 826–841 (PARRRPSAGPRPRPKG) shows a compositional bias: basic residues. Residues 889–989 (VGKLAELQCE…KDTIQNLQLL (101 aa)) adopt a coiled-coil conformation. Over residues 990-999 (PRTSESQSQP) the composition is skewed to polar residues. The segment at 990–1012 (PRTSESQSQPVPLKAPCINGDTT) is disordered.

Its subcellular location is the cytoplasm. The protein resides in the cell cortex. Functions as a Ras GTPase-activating protein. Plays an important role in the expansion and functions of natural killer T (NKT) cells in the liver by negatively regulating RAS activity and the down-stream ERK signaling pathway. This chain is RAS protein activator like-3 (RASAL3), found in Bos taurus (Bovine).